Consider the following 295-residue polypeptide: MKLGFNLDFNELDLTGLKKLDQIFLDYLFKADKSLHKDLMLFRATPLSIIPQDYSKFLLKISPHLDDFLAELFCISKEVTISRLKHKDFDIIYECKRKFVQRVAVKKYPLEKIKDIDFEDVYLKITNLIGTNFTSREFAKQIVIWQQDEESFSLELDIAARYAAYRVFSYYNSLSSWNKNLFLQNDILFNLQQKLDKKNLIDDKKILKYQKNERVDFDYKDSFFNLDEALNNSHYCIYCHKRDKDSCSKGFDVIPHFDRVISVDKIPRLSYRMTTGCPLKQKISEMNYIKAQVLI.

This is an uncharacterized protein from Rickettsia prowazekii (strain Madrid E).